The following is a 161-amino-acid chain: Nucleotide-binding protein swp_1151 (161 aa).

It belongs to the YajQ family.

In terms of biological role, nucleotide-binding protein. The chain is Nucleotide-binding protein swp_1151 from Shewanella piezotolerans (strain WP3 / JCM 13877).